Reading from the N-terminus, the 415-residue chain is Secernin-2 (415 aa).

Cys8 is an active-site residue.

It belongs to the peptidase C69 family. Secernin subfamily.

The chain is Secernin-2 (scrn2) from Danio rerio (Zebrafish).